The sequence spans 896 residues: Desmocollin-3 (896 aa).

A signal peptide spans 1–31 (MVVPEFRSPQCRALCTKLLLTLWVFSFVGEA). A propeptide spanning residues 32–135 (CKKVTFHVPS…KETVLRRSKR (104 aa)) is cleaved from the precursor. 5 consecutive Cadherin domains span residues 136 to 243 (RWAP…YPLF), 244 to 355 (TEAI…APTF), 356 to 472 (RQNT…GPEC), 473 to 580 (KPPE…EIIQ), and 581 to 691 (DYIV…TLGK). The Extracellular segment spans residues 136-695 (RWAPIPCSMQ…GITLGKWAIL (560 aa)). N-linked (GlcNAc...) asparagine glycosylation occurs at Asn166. 2 N-linked (GlcNAc...) asparagine glycosylation sites follow: Asn392 and Asn547. Asn630 carries an N-linked (GlcNAc...) (high mannose) asparagine glycan. Residues 696–716 (AILLGIALLFSVLLTLVCGVV) traverse the membrane as a helical segment. The Cytoplasmic segment spans residues 717–896 (TARKGKHFPE…LTLAETCTKR (180 aa)).

As to quaternary structure, may form homodimers. Interacts with DSG1; there is evidence to suggest that the interaction promotes cell-cell adhesion of keratinocytes. As to expression, expressed in the basal layers of epidermal stratified epithelia from birth (at protein level).

Its subcellular location is the cell membrane. The protein localises to the cell junction. It localises to the desmosome. It is found in the cytoplasm. A component of desmosome cell-cell junctions which are required for positive regulation of cellular adhesion. Required for cell-cell adhesion in the epidermis, as a result required for the maintenance of the dermal cohesion and the dermal barrier function. Required for cell-cell adhesion of epithelial cell layers surrounding the telogen hair club, as a result plays an important role in telogen hair shaft anchorage. Essential for successful completion of embryo compaction and development beyond the 8-cell stage. The protein is Desmocollin-3 (Dsc3) of Mus musculus (Mouse).